Here is a 1394-residue protein sequence, read N- to C-terminus: DNA-directed RNA polymerase subunit beta' (1394 aa).

Positions 71, 73, 86, and 89 each coordinate Zn(2+). Asp462, Asp464, and Asp466 together coordinate Mg(2+). Zn(2+) is bound by residues Cys811, Cys885, Cys892, and Cys895.

Belongs to the RNA polymerase beta' chain family. As to quaternary structure, the RNAP catalytic core consists of 2 alpha, 1 beta, 1 beta' and 1 omega subunit. When a sigma factor is associated with the core the holoenzyme is formed, which can initiate transcription. Requires Mg(2+) as cofactor. Zn(2+) serves as cofactor.

The enzyme catalyses RNA(n) + a ribonucleoside 5'-triphosphate = RNA(n+1) + diphosphate. Functionally, DNA-dependent RNA polymerase catalyzes the transcription of DNA into RNA using the four ribonucleoside triphosphates as substrates. The chain is DNA-directed RNA polymerase subunit beta' from Xanthobacter autotrophicus (strain ATCC BAA-1158 / Py2).